A 544-amino-acid chain; its full sequence is Chaperonin GroEL 1 (544 aa).

Residues 30–33 (TLGP), Lys51, 87–91 (DGTTT), Gly415, 481–483 (DAL), and Asp497 each bind ATP.

Belongs to the chaperonin (HSP60) family. As to quaternary structure, forms a cylinder of 14 subunits composed of two heptameric rings stacked back-to-back. Interacts with the co-chaperonin GroES.

Its subcellular location is the cytoplasm. The catalysed reaction is ATP + H2O + a folded polypeptide = ADP + phosphate + an unfolded polypeptide.. Its function is as follows. Together with its co-chaperonin GroES, plays an essential role in assisting protein folding. The GroEL-GroES system forms a nano-cage that allows encapsulation of the non-native substrate proteins and provides a physical environment optimized to promote and accelerate protein folding. This chain is Chaperonin GroEL 1, found in Chlamydia caviae (strain ATCC VR-813 / DSM 19441 / 03DC25 / GPIC) (Chlamydophila caviae).